A 689-amino-acid chain; its full sequence is Methionine--tRNA ligase (689 aa).

The short motif at 15 to 25 (PYANGPIHLGH) is the 'HIGH' region element. The Zn(2+) site is built by C146, C149, C159, and C162. Positions 332–336 (KMSKS) match the 'KMSKS' region motif. K335 serves as a coordination point for ATP. Positions 588–689 (DFAKIDLRIA…EGAQPGMRVK (102 aa)) constitute a tRNA-binding domain.

This sequence belongs to the class-I aminoacyl-tRNA synthetase family. MetG type 1 subfamily. Homodimer. Zn(2+) serves as cofactor.

The protein resides in the cytoplasm. It catalyses the reaction tRNA(Met) + L-methionine + ATP = L-methionyl-tRNA(Met) + AMP + diphosphate. Is required not only for elongation of protein synthesis but also for the initiation of all mRNA translation through initiator tRNA(fMet) aminoacylation. In Shewanella baltica (strain OS223), this protein is Methionine--tRNA ligase.